The following is a 399-amino-acid chain: Serine/threonine transporter SstT (399 aa).

9 consecutive transmembrane segments (helical) span residues 8–28, 37–57, 77–97, 134–154, 178–198, 212–232, 284–304, 312–332, and 348–370; these read LSLV…AFLF, IFGE…VFVL, ILFL…IADL, PVVA…IILG, VIHL…AVTF, LLLV…PIMV, VIIP…ITVL, LGIS…SISA, and VACS…GMVI.

Belongs to the dicarboxylate/amino acid:cation symporter (DAACS) (TC 2.A.23) family.

It is found in the cell inner membrane. It catalyses the reaction L-serine(in) + Na(+)(in) = L-serine(out) + Na(+)(out). The catalysed reaction is L-threonine(in) + Na(+)(in) = L-threonine(out) + Na(+)(out). In terms of biological role, involved in the import of serine and threonine into the cell, with the concomitant import of sodium (symport system). The sequence is that of Serine/threonine transporter SstT from Acinetobacter baylyi (strain ATCC 33305 / BD413 / ADP1).